The sequence spans 142 residues: Nucleoside diphosphate kinase (142 aa).

ATP is bound by residues K11, F59, R87, T93, R104, and N114. Catalysis depends on H117, which acts as the Pros-phosphohistidine intermediate.

The protein belongs to the NDK family. Homotetramer. Requires Mg(2+) as cofactor.

The protein localises to the cytoplasm. It carries out the reaction a 2'-deoxyribonucleoside 5'-diphosphate + ATP = a 2'-deoxyribonucleoside 5'-triphosphate + ADP. It catalyses the reaction a ribonucleoside 5'-diphosphate + ATP = a ribonucleoside 5'-triphosphate + ADP. Functionally, major role in the synthesis of nucleoside triphosphates other than ATP. The ATP gamma phosphate is transferred to the NDP beta phosphate via a ping-pong mechanism, using a phosphorylated active-site intermediate. This Yersinia pseudotuberculosis serotype I (strain IP32953) protein is Nucleoside diphosphate kinase.